The chain runs to 273 residues: Large ribosomal subunit protein uL2cz/uL2cy (273 aa).

Positions Asn-224–Lys-273 are disordered. Over residues Lys-262–Lys-273 the composition is skewed to basic and acidic residues.

Belongs to the universal ribosomal protein uL2 family. As to quaternary structure, part of the 50S ribosomal subunit.

Its subcellular location is the plastid. The protein resides in the chloroplast. This is Large ribosomal subunit protein uL2cz/uL2cy (rpl2-A) from Piper cenocladum (Ant piper).